Consider the following 317-residue polypeptide: E3 ubiquitin-protein ligase NRDP1 (317 aa).

The segment at 18 to 57 adopts an RING-type; degenerate zinc-finger fold; that stretch reads CPICSGVLEEPVQAPHCEHAFCNACITQWFSQQQTCPVDR. Residues 78-138 form an SIAH-type; degenerate zinc finger; sequence KLQIACDNAV…LPNHNCIKHL (61 aa).

Interacts with USP8, ERBB3, PRKN and BIRC6. Interacts with CSF2RB, EPOR, IL3RA, MYD88 and TBK1. Interacts with CLEC16A. Autoubiquitinated. Autoubiquitination leads to proteasomal degradation. Deubiquitinated by USP8 to get stabilized which induces apoptosis. As to expression, detected in ovary, testis and prostate.

The enzyme catalyses S-ubiquitinyl-[E2 ubiquitin-conjugating enzyme]-L-cysteine + [acceptor protein]-L-lysine = [E2 ubiquitin-conjugating enzyme]-L-cysteine + N(6)-ubiquitinyl-[acceptor protein]-L-lysine.. The protein operates within protein modification; protein ubiquitination. Functionally, acts as E3 ubiquitin-protein ligase and regulates the degradation of target proteins. Polyubiquitinates MYD88. Negatively regulates MYD88-dependent production of pro-inflammatory cytokines. Can promote TRIF-dependent production of type I interferon and inhibits infection with vesicular stomatitis virus. Promotes also activation of TBK1 and IRF3. Involved in the ubiquitination of erythropoietin (EPO) and interleukin-3 (IL-3) receptors. Thus, through maintaining basal levels of cytokine receptors, RNF41 is involved in the control of hematopoietic progenitor cell differentiation into myeloerythroid lineages. Contributes to the maintenance of steady-state ERBB3 levels by mediating its growth factor-independent degradation. Involved in the degradation of the inhibitor of apoptosis BIRC6 and thus is an important regulator of cell death by promoting apoptosis. Also acts as a PRKN modifier that accelerates its degradation, resulting in a reduction of PRKN activity, influencing the balance of intracellular redox state. The RNF41-PRKN pathway regulates autophagosome-lysosome fusion during late mitophagy. Mitophagy is a selective form of autophagy necessary for mitochondrial quality control. The sequence is that of E3 ubiquitin-protein ligase NRDP1 (RNF41) from Homo sapiens (Human).